A 104-amino-acid chain; its full sequence is Large ribosomal subunit protein uL24 (104 aa).

Belongs to the universal ribosomal protein uL24 family. In terms of assembly, part of the 50S ribosomal subunit.

Functionally, one of two assembly initiator proteins, it binds directly to the 5'-end of the 23S rRNA, where it nucleates assembly of the 50S subunit. In terms of biological role, one of the proteins that surrounds the polypeptide exit tunnel on the outside of the subunit. This Herminiimonas arsenicoxydans protein is Large ribosomal subunit protein uL24.